Here is a 545-residue protein sequence, read N- to C-terminus: Phenylalanine--tRNA ligase beta subunit (545 aa).

The 77-residue stretch at 270–346 folds into the B5 domain; sequence LEPKERLLTT…KGYGYENIKV (77 aa). Residues aspartate 324, aspartate 330, glutamate 333, and aspartate 334 each coordinate Mg(2+).

Belongs to the phenylalanyl-tRNA synthetase beta subunit family. Type 2 subfamily. Tetramer of two alpha and two beta subunits. Mg(2+) serves as cofactor.

Its subcellular location is the cytoplasm. It carries out the reaction tRNA(Phe) + L-phenylalanine + ATP = L-phenylalanyl-tRNA(Phe) + AMP + diphosphate + H(+). The sequence is that of Phenylalanine--tRNA ligase beta subunit from Methanosarcina acetivorans (strain ATCC 35395 / DSM 2834 / JCM 12185 / C2A).